Reading from the N-terminus, the 134-residue chain is D-ribose pyranase (134 aa).

The active-site Proton donor is His20. Substrate is bound by residues Asp28, His99, and Tyr123–Asn125.

The protein belongs to the RbsD / FucU family. RbsD subfamily. As to quaternary structure, homodecamer.

Its subcellular location is the cytoplasm. It carries out the reaction beta-D-ribopyranose = beta-D-ribofuranose. The protein operates within carbohydrate metabolism; D-ribose degradation; D-ribose 5-phosphate from beta-D-ribopyranose: step 1/2. Catalyzes the interconversion of beta-pyran and beta-furan forms of D-ribose. The polypeptide is D-ribose pyranase (Staphylococcus aureus (strain Mu3 / ATCC 700698)).